Here is a 73-residue protein sequence, read N- to C-terminus: Serine rich endogenous peptide 1 (73 aa).

The signal sequence occupies residues 1 to 28 (MGMSGSSGLVHVLMLLLLLSILFHHTES). A disordered region spans residues 48 to 73 (YKPNTAVETPPSRSRRGGGGQNTGAD). The SCOOP motif motif lies at 53 to 67 (AVETPPSRSRRGGGG). The SxS motif essential for MIK2 binding motif lies at 59–61 (SRS). Positions 64–73 (GGGGQNTGAD) are enriched in gly residues.

It belongs to the serine rich endogenous peptide (SCOOP) phytocytokine family. As to quaternary structure, interacts with MIK2 (via extracellular leucine-rich repeat domain); this interaction triggers the formation of complex between MIK2 and the BAK1/SERK3 and SERK4 coreceptors, and subsequent BAK1 activation by phosphorylation. In terms of tissue distribution, mostly expressed in leaves and flowers, and, to a lower extent, in seedlings shoots.

It is found in the cell membrane. The protein localises to the secreted. The protein resides in the extracellular space. It localises to the apoplast. In terms of biological role, brassicaceae-specific phytocytokine (plant endogenous peptide released into the apoplast) perceived by MIK2 in a BAK1/SERK3 and SERK4 coreceptors-dependent manner, that modulates various physiological and antimicrobial processes including growth prevention and reactive oxygen species (ROS) response regulation. In Arabidopsis thaliana (Mouse-ear cress), this protein is Serine rich endogenous peptide 1.